A 153-amino-acid chain; its full sequence is Large ribosomal subunit protein uL30 (153 aa).

The protein belongs to the universal ribosomal protein uL30 family. In terms of assembly, part of the 50S ribosomal subunit.

The sequence is that of Large ribosomal subunit protein uL30 from Methanosarcina mazei (strain ATCC BAA-159 / DSM 3647 / Goe1 / Go1 / JCM 11833 / OCM 88) (Methanosarcina frisia).